A 158-amino-acid chain; its full sequence is NAD(P)H-quinone oxidoreductase subunit J, chloroplastic (158 aa).

The protein belongs to the complex I 30 kDa subunit family. As to quaternary structure, NDH is composed of at least 16 different subunits, 5 of which are encoded in the nucleus.

It is found in the plastid. The protein resides in the chloroplast thylakoid membrane. The enzyme catalyses a plastoquinone + NADH + (n+1) H(+)(in) = a plastoquinol + NAD(+) + n H(+)(out). It catalyses the reaction a plastoquinone + NADPH + (n+1) H(+)(in) = a plastoquinol + NADP(+) + n H(+)(out). Functionally, NDH shuttles electrons from NAD(P)H:plastoquinone, via FMN and iron-sulfur (Fe-S) centers, to quinones in the photosynthetic chain and possibly in a chloroplast respiratory chain. The immediate electron acceptor for the enzyme in this species is believed to be plastoquinone. Couples the redox reaction to proton translocation, and thus conserves the redox energy in a proton gradient. This chain is NAD(P)H-quinone oxidoreductase subunit J, chloroplastic, found in Spinacia oleracea (Spinach).